A 1041-amino-acid polypeptide reads, in one-letter code: Integrator complex subunit 3 (1041 aa).

N-acetylmethionine is present on M1. Phosphoserine is present on residues S500, S535, and S993. The segment at 975–1041 (YEDSSTKPPK…GSSAVGSDSD (67 aa)) is disordered. Residues 1006–1020 (AEEESGSSSASEEED) show a composition bias toward acidic residues.

This sequence belongs to the Integrator subunit 3 family. Component of the Integrator complex, composed of core subunits INTS1, INTS2, INTS3, INTS4, INTS5, INTS6, INTS7, INTS8, INTS9/RC74, INTS10, INTS11/CPSF3L, INTS12, INTS13, INTS14 and INTS15. The core complex associates with protein phosphatase 2A subunits PPP2CA and PPP2R1A, to form the Integrator-PP2A (INTAC) complex. Component of the SOSS complex, composed of SOSS-B (SOSS-B1/NABP2 or SOSS-B2/NABP1), SOSS-A/INTS3 and SOSS-C/INIP. SOSS complexes containing SOSS-B1/NABP2 are more abundant than complexes containing SOSS-B2/NABP1. Interacts with SOSS-B1/NABP2, SOSS-B2/NABP1 and SOSS-C/INIP; the interaction is direct. Interacts with NBN/NBS1.

Its subcellular location is the nucleus. The protein localises to the cytoplasm. Functionally, component of the integrator complex, a multiprotein complex that terminates RNA polymerase II (Pol II) transcription in the promoter-proximal region of genes. The integrator complex provides a quality checkpoint during transcription elongation by driving premature transcription termination of transcripts that are unfavorably configured for transcriptional elongation: the complex terminates transcription by (1) catalyzing dephosphorylation of the C-terminal domain (CTD) of Pol II subunit POLR2A/RPB1 and SUPT5H/SPT5, (2) degrading the exiting nascent RNA transcript via endonuclease activity and (3) promoting the release of Pol II from bound DNA. The integrator complex is also involved in terminating the synthesis of non-coding Pol II transcripts, such as enhancer RNAs (eRNAs), small nuclear RNAs (snRNAs), telomerase RNAs and long non-coding RNAs (lncRNAs). Within the integrator complex, INTS3 is involved in the post-termination step: INTS3 binds INTS7 in the open conformation of integrator complex and prevents the rebinding of Pol II to the integrator after termination cycle. Mediates recruitment of cytoplasmic dynein to the nuclear envelope, probably as component of the integrator complex. Its function is as follows. Component of the SOSS complex, a multiprotein complex that functions downstream of the MRN complex to promote DNA repair and G2/M checkpoint. The SOSS complex associates with single-stranded DNA at DNA lesions and influences diverse endpoints in the cellular DNA damage response including cell-cycle checkpoint activation, recombinational repair and maintenance of genomic stability. The SOSS complex is required for efficient homologous recombination-dependent repair of double-strand breaks (DSBs) and ATM-dependent signaling pathways. In the SOSS complex, it is required for the assembly of the complex and for stabilization of the complex at DNA damage sites. In Mus musculus (Mouse), this protein is Integrator complex subunit 3 (Ints3).